A 370-amino-acid polypeptide reads, in one-letter code: MPHQQILMLFGLLPVATNISTWWNFGSMLLACLTLQLLTGFFLAVHYTANINLAFSSIIHITRDVPYGWMMQNLHAIGASMFFICIYIHIARGLYYGSYLNKETWLSGTTLLIMLMATAFFGYVLPWGQMSFWAATVITNLLTAIPYLGSTMTTWLWGGFAINDPTLTRFFALHFILPFGIISLSSLHILLLHEEGSSNPLGTNSDIDKIPFHPYQTYKDMLMLTIMTIMLLTIVSFFPDIFNDPDNFSKANPLVTPQHIKPEWYFLFAYGILRSIPNKLGGALALTMSIMMLLTLPFTHTSKLRSMMFRPFMQLTFWTFTATFLVISWTATKPVEPPFTTISQVAALMYFLFFISNPIMGWLENKIMKL.

4 helical membrane passes run 25–45 (FGSM…FLAV), 69–90 (WMMQ…YIHI), 105–125 (WLSG…GYVL), and 170–190 (FFAL…LHIL). Residues His75 and His89 each contribute to the heme b site. Residues His174 and His188 each coordinate heme b. His193 is an a ubiquinone binding site. 4 helical membrane passes run 218–238 (YKDM…VSFF), 280–300 (LGGA…PFTH), 312–332 (FMQL…WTAT), and 339–358 (FTTI…ISNP).

Belongs to the cytochrome b family. As to quaternary structure, the cytochrome bc1 complex contains 3 respiratory subunits (MT-CYB, CYC1 and UQCRFS1), 2 core proteins (UQCRC1 and UQCRC2) and probably 6 low-molecular weight proteins. Requires heme b as cofactor.

It localises to the mitochondrion inner membrane. Component of the ubiquinol-cytochrome c reductase complex (complex III or cytochrome b-c1 complex) that is part of the mitochondrial respiratory chain. The b-c1 complex mediates electron transfer from ubiquinol to cytochrome c. Contributes to the generation of a proton gradient across the mitochondrial membrane that is then used for ATP synthesis. This chain is Cytochrome b (MT-CYB), found in Chilabothrus strigilatus fosteri (Bimini Island boa constrictor).